We begin with the raw amino-acid sequence, 136 residues long: ATP synthase epsilon chain (136 aa).

The protein belongs to the ATPase epsilon chain family. As to quaternary structure, F-type ATPases have 2 components, CF(1) - the catalytic core - and CF(0) - the membrane proton channel. CF(1) has five subunits: alpha(3), beta(3), gamma(1), delta(1), epsilon(1). CF(0) has three main subunits: a, b and c.

It localises to the cell inner membrane. Functionally, produces ATP from ADP in the presence of a proton gradient across the membrane. The polypeptide is ATP synthase epsilon chain (Afipia carboxidovorans (strain ATCC 49405 / DSM 1227 / KCTC 32145 / OM5) (Oligotropha carboxidovorans)).